We begin with the raw amino-acid sequence, 471 residues long: Kynurenine 3-monooxygenase (471 aa).

Residues Val-19, 37–40 (YESR), and Ala-57 contribute to the FAD site. 2 residues coordinate L-kynurenine: Arg-85 and Tyr-99. FAD-binding positions include Arg-111, Leu-136, Thr-172, Asp-304, and 317–318 (MN). Residues Asn-363 and Tyr-398 each coordinate L-kynurenine. The next 2 membrane-spanning stretches (helical) occupy residues 385–404 (CLHT…VTFS) and 425–445 (ALFF…TGPT).

It belongs to the aromatic-ring hydroxylase family. KMO subfamily. FAD is required as a cofactor.

It is found in the mitochondrion outer membrane. It carries out the reaction L-kynurenine + NADPH + O2 + H(+) = 3-hydroxy-L-kynurenine + NADP(+) + H2O. It functions in the pathway cofactor biosynthesis; NAD(+) biosynthesis; quinolinate from L-kynurenine: step 1/3. Its function is as follows. Catalyzes the hydroxylation of L-kynurenine (L-Kyn) to form 3-hydroxy-L-kynurenine (L-3OHKyn). Required for synthesis of quinolinic acid, a neurotoxic NMDA receptor antagonist and potential endogenous inhibitor of NMDA receptor signaling in axonal targeting, synaptogenesis and apoptosis during brain development. Quinolinic acid may also affect NMDA receptor signaling in pancreatic beta cells, osteoblasts, myocardial cells, and the gastrointestinal tract. The sequence is that of Kynurenine 3-monooxygenase from Sus scrofa (Pig).